A 248-amino-acid chain; its full sequence is Ferric nitrobindin-like protein (248 aa).

2 stretches are compositionally biased toward polar residues: residues 1–25 and 32–43; these read MSSD…TNSG and QAVNLAAEQSKS. A disordered region spans residues 1–49; sequence MSSDKANNQSPDQGANTPAESTNSGPKLDGNQAVNLAAEQSKSTADKNL. Residues 82 to 88 carry the GXWXGXG motif; the sequence is GVWRGQG. The segment at 118–147 is disordered; the sequence is SRTWKINPPAEEGAEADGDEASAESAGEPE. The segment covering 129-139 has biased composition (acidic residues); the sequence is EGAEADGDEAS.

Belongs to the nitrobindin family.

This chain is Ferric nitrobindin-like protein, found in Corynebacterium urealyticum (strain ATCC 43042 / DSM 7109).